A 147-amino-acid chain; its full sequence is F420H(2)-dependent reductase Rv1155 (147 aa).

Coenzyme F420-(gamma-Glu)n is bound by residues Gln-32, Gln-37, Ser-50, Ala-56–Asn-60, Trp-77–Tyr-79, and His-138.

Belongs to the F420H(2)-dependent biliverdin reductase family. In terms of assembly, homodimer.

In terms of biological role, F420H(2)-dependent reductase able to catalyze the reduction of biliverdin-IXalpha to bilirubin-IXalpha in vitro. However, kinetic parameters show that it is less efficient than the biliverdin reductase Rv2074 and suggest biliverdin-IXalpha is unlikely to be the native substrate of Rv1155, which probably catalyzes the reduction of an alternative molecule in vivo. Binds coenzyme F420, but does not bind FMN or other flavins. Cannot use pyridoxine 5'-phosphate, pyridoxamine 5'-phosphate, pyridoxal 5'-phosphate (PLP), the anti-tuberculosis drug PA-824 or aflatoxin analogs as substrates. This chain is F420H(2)-dependent reductase Rv1155, found in Mycobacterium tuberculosis (strain ATCC 25618 / H37Rv).